We begin with the raw amino-acid sequence, 272 residues long: uncharacterized protein (272 aa).

This is an uncharacterized protein from Bacillus anthracis.